Reading from the N-terminus, the 275-residue chain is Protein FAM210A (275 aa).

The tract at residues 68–108 is disordered; sequence SSQPADTPRKVPEEREPLTSATEVPKQSPVESDASDPDPLQ. A compositionally biased stretch (basic and acidic residues) spans 74–84; that stretch reads TPRKVPEEREP. Residues 109-221 enclose the DUF1279 domain; sequence DKSISLVQRF…GYMSTPPPVK (113 aa). Residues 128 to 148 traverse the membrane as a helical segment; the sequence is VMIPVHLVTSTVWFGSFYYAA. The stretch at 221 to 271 forms a coiled coil; the sequence is KEYLQDRMEETKDKITEKMEETKDKITEKMEETKDKITEKIQETKDKVSFK.

The protein belongs to the FAM210 family. Interacts with ATAD3A.

The protein resides in the membrane. Its subcellular location is the mitochondrion. It is found in the cytoplasm. Functionally, may play a role in the structure and strength of both muscle and bone. In Gallus gallus (Chicken), this protein is Protein FAM210A (FAM210A).